The primary structure comprises 547 residues: Isoflavonoid 7-O-beta-apiosyl-glucoside beta-glycosidase (547 aa).

The signal sequence occupies residues 1-31 (MHAMTFKAILLLGLLALVSTSASIAFAKEVR). Residue Q59 coordinates a beta-D-glucoside. Residues N72 and N132 are each glycosylated (N-linked (GlcNAc...) asparagine). H159 is an a beta-D-glucoside binding site. The N-linked (GlcNAc...) asparagine glycan is linked to N175. 204 to 205 (NE) lines the a beta-D-glucoside pocket. E205 (proton donor) is an active-site residue. Cysteines 224 and 232 form a disulfide. The N-linked (GlcNAc...) asparagine glycan is linked to N285. Residues Y348, E419, W468, 475-476 (EW), and F484 each bind a beta-D-glucoside. Residue E419 is the Nucleophile of the active site. N490 carries an N-linked (GlcNAc...) asparagine glycan.

The protein belongs to the glycosyl hydrolase 1 family. Homotetramer.

The enzyme catalyses 7-[beta-D-apiofuranosyl-(1-&gt;6)-beta-D-glucopyranosyloxy]isoflavonoid + H2O = a 7-hydroxyisoflavonoid + beta-D-apiofuranosyl-(1-&gt;6)-D-glucose.. Not inhibited by iron, calcium, mercury, manganese, zinc or EDTA. In terms of biological role, hydrolyzes dalpatein 7-O-beta-D-apiofuranosyl-(1-&gt;6)-beta-D-glucopyranoside and dalnigrein 7-O-beta-D-apiofuranosyl-(1-&gt;6)-beta-D-glucopyranoside. Also has activity towards pNP-beta-D-fucoside and pNP-beta-D-glucoside, but not pNP-beta-cellobioside. This is Isoflavonoid 7-O-beta-apiosyl-glucoside beta-glycosidase from Dalbergia nigrescens (Thai blackwood).